Consider the following 434-residue polypeptide: Pre-mRNA-splicing factor PRP46 (434 aa).

WD repeat units follow at residues 120–160 (GHTG…LKIT), 163–202 (GHVM…AIRD), 205–244 (GHLS…EIMV), 247–288 (GHKS…KVLT), 290–329 (HSRN…TNFQ), 331–369 (QNTG…KYQS), and 380–419 (ESER…TEDT).

Belongs to the WD repeat PRL1/PRL2 family. As to quaternary structure, associated with the spliceosome.

The protein resides in the cytoplasm. Its subcellular location is the nucleus. In terms of biological role, involved in pre-mRNA splicing and required for cell cycle progression at G2/M. The protein is Pre-mRNA-splicing factor PRP46 (PRP46) of Kluyveromyces lactis (strain ATCC 8585 / CBS 2359 / DSM 70799 / NBRC 1267 / NRRL Y-1140 / WM37) (Yeast).